The following is a 179-amino-acid chain: UPF0227 protein Shewmr7_1806 (179 aa).

Belongs to the UPF0227 family.

In Shewanella sp. (strain MR-7), this protein is UPF0227 protein Shewmr7_1806.